The primary structure comprises 790 residues: PAN2-PAN3 deadenylation complex subunit PAN3 (790 aa).

Disordered regions lie at residues 166 to 191 (IAQQ…AVSA) and 235 to 259 (AMIS…ASPI). A compositionally biased stretch (low complexity) spans 168–191 (QQQPQHPQKQQQHPPSVGGGAVSA). The segment at 369 to 655 (DAAEAAQHAL…SVTDLMPMIG (287 aa)) is pseudokinase domain. ATP is bound by residues Arg423, 472 to 479 (DYHPGSQT), and 552 to 553 (TK). Positions 656 to 694 (ARFYTQLDALQSKIDMQEDELAKEMENGRLYRILVKLNS) form a coiled coil. The knob domain stretch occupies residues 695-790 (INERPDFNLD…FSELMSSAAN (96 aa)).

Belongs to the protein kinase superfamily. PAN3 family. Homodimer. Forms a heterotrimer with a catalytic subunit PAN2 to form the poly(A)-nuclease (PAN) deadenylation complex. Interacts (via PAM-2 motif) with poly(A)-binding protein (via PABC domain), conferring substrate specificity of the enzyme complex. Interacts with the GW182 family protein gw. Interacts with Gyf.

The protein localises to the cytoplasm. Its subcellular location is the P-body. Regulatory subunit of the poly(A)-nuclease (PAN) deadenylation complex, one of two cytoplasmic mRNA deadenylases involved in general and miRNA-mediated mRNA turnover. PAN specifically shortens poly(A) tails of RNA and the activity is stimulated by poly(A)-binding protein (PABP). PAN deadenylation is followed by rapid degradation of the shortened mRNA tails by the CCR4-NOT complex. Deadenylated mRNAs are then degraded by two alternative mechanisms, namely exosome-mediated 3'-5' exonucleolytic degradation, or deadenylation-dependent mRNA decaping and subsequent 5'-3' exonucleolytic degradation by XRN1. PAN3 acts as a positive regulator for PAN activity, recruiting the catalytic subunit PAN2 to mRNA via its interaction with RNA and PABP, and to miRNA targets via its interaction with GW182 family proteins. The protein is PAN2-PAN3 deadenylation complex subunit PAN3 of Drosophila melanogaster (Fruit fly).